Here is a 325-residue protein sequence, read N- to C-terminus: MQGRVAGSCAPLGLLLVCLHLPGLFARSIGVVEEKVSQNLGTNLPQLGQPSSTGPSNSEHPQPALDPRSNDLARVPLKLSVPASDGFPPAGGSAVQRWPPSWGLPAMDSWPPEDPWQMMAAAAEDRLGEALPEELSYLSSAAALAPGSGPLPGESSPDATGLSPKASLLHQDSESRRLPRSNSLGAGGKILSQRPPWSLIHRVLPDHPWGTLNPSVSWGGGGPGTGWGTRPMPHPEGIWGINNQPPGTSWGNINRYPGGSWGNINRYPGGSWGNINRYPGGSWGNIHLYPGINNPFPPGVLRPPGSSWNIPAGFPNPPSPRLQWG.

Positions 1 to 26 are cleaved as a signal peptide; the sequence is MQGRVAGSCAPLGLLLVCLHLPGLFA. A compositionally biased stretch (polar residues) spans 41-60; that stretch reads GTNLPQLGQPSSTGPSNSEH. Disordered stretches follow at residues 41 to 110 and 147 to 189; these read GTNL…MDSW and GSGP…AGGK. The segment covering 147–157 has biased composition (low complexity); it reads GSGPLPGESSP.

In terms of assembly, binds to numerous extracellular matrix proteins. As to expression, expressed in skin and tonsils.

The protein localises to the secreted. It localises to the extracellular space. Its subcellular location is the extracellular matrix. This is an uncharacterized protein from Homo sapiens (Human).